The primary structure comprises 329 residues: MTNIGVSIIGSGSAIPKTSLDNQQLSQIVETSDEWIISRTGINKRQLVDTTESLCSLATQASLAALNQANITPKDIDLIILATSTPDDLFGTACKIQWELGAQKAVAFDITVACSGFLFALVTGAQFIRNGVYQNVLLIGADILSRWVDWEDRRTCVLFGDGAGAVLLQASESDRLLGFELGSDGSQNSCLSLSYQPQEKRIIEGVTVSQGTYQPIAMNGKEVYRFVVQKVPEAIEKALLKANIDIDKLDWLLLHQANQRILDAVANRLNIPPEKVISNLRNYGNTSAASIPLALDEVVREGLVKSGDIIAASGFGAGLSWGAVIFQWN.

Active-site residues include C114 and H255. The tract at residues 256 to 260 is ACP-binding; sequence QANQR. N285 is an active-site residue.

This sequence belongs to the thiolase-like superfamily. FabH family. As to quaternary structure, homodimer.

It is found in the cytoplasm. The catalysed reaction is malonyl-[ACP] + acetyl-CoA + H(+) = 3-oxobutanoyl-[ACP] + CO2 + CoA. It participates in lipid metabolism; fatty acid biosynthesis. Functionally, catalyzes the condensation reaction of fatty acid synthesis by the addition to an acyl acceptor of two carbons from malonyl-ACP. Catalyzes the first condensation reaction which initiates fatty acid synthesis and may therefore play a role in governing the total rate of fatty acid production. Possesses both acetoacetyl-ACP synthase and acetyl transacylase activities. Its substrate specificity determines the biosynthesis of branched-chain and/or straight-chain of fatty acids. In Trichodesmium erythraeum (strain IMS101), this protein is Beta-ketoacyl-[acyl-carrier-protein] synthase III.